Here is a 101-residue protein sequence, read N- to C-terminus: Protein snet-1 (101 aa).

A signal peptide spans 1–20; sequence MARFTPLLMILLALVPLYYS.

In terms of processing, may be degraded by the nep-2 peptidase. Expressed in coelomocytes, the ASK sensory neurons and interneurons AIB, AIM and PVQ.

Its subcellular location is the secreted. The protein localises to the perikaryon. Its function is as follows. Negatively regulates chemotaxis and olfactory plasticity which is the change from positive chemotaxis to dispersal after prolonged exposure to an odorant. May be down-regulated in response to pheromone exposure, resulting in promotion of olfactory plasticity. The polypeptide is Protein snet-1 (Caenorhabditis elegans).